A 226-amino-acid chain; its full sequence is ATP synthase F(0) complex subunit a (226 aa).

Helical transmembrane passes span 12-32 (PTMMGLPIVILIIMFPSILFP), 68-88 (WTLMLMSLILFIGSTNLLGLL), 97-117 (QLSMNLGMAIPLWAGTVFMGF), 135-155 (IFLIPMLVIIETISLFIQPMA), 164-184 (ITAGHLLIHLIGGATLALMDI), and 189-209 (ALITFIILILLTILEFAVAMI).

This sequence belongs to the ATPase A chain family. Component of the ATP synthase complex composed at least of ATP5F1A/subunit alpha, ATP5F1B/subunit beta, ATP5MC1/subunit c (homooctomer), MT-ATP6/subunit a, MT-ATP8/subunit 8, ATP5ME/subunit e, ATP5MF/subunit f, ATP5MG/subunit g, ATP5MK/subunit k, ATP5MJ/subunit j, ATP5F1C/subunit gamma, ATP5F1D/subunit delta, ATP5F1E/subunit epsilon, ATP5PF/subunit F6, ATP5PB/subunit b, ATP5PD/subunit d, ATP5PO/subunit OSCP. ATP synthase complex consists of a soluble F(1) head domain (subunits alpha(3) and beta(3)) - the catalytic core - and a membrane F(0) domain - the membrane proton channel (subunits c, a, 8, e, f, g, k and j). These two domains are linked by a central stalk (subunits gamma, delta, and epsilon) rotating inside the F1 region and a stationary peripheral stalk (subunits F6, b, d, and OSCP). Interacts with DNAJC30; interaction is direct.

It is found in the mitochondrion inner membrane. The catalysed reaction is H(+)(in) = H(+)(out). Its function is as follows. Subunit a, of the mitochondrial membrane ATP synthase complex (F(1)F(0) ATP synthase or Complex V) that produces ATP from ADP in the presence of a proton gradient across the membrane which is generated by electron transport complexes of the respiratory chain. ATP synthase complex consist of a soluble F(1) head domain - the catalytic core - and a membrane F(1) domain - the membrane proton channel. These two domains are linked by a central stalk rotating inside the F(1) region and a stationary peripheral stalk. During catalysis, ATP synthesis in the catalytic domain of F(1) is coupled via a rotary mechanism of the central stalk subunits to proton translocation. With the subunit c (ATP5MC1), forms the proton-conducting channel in the F(0) domain, that contains two crucial half-channels (inlet and outlet) that facilitate proton movement from the mitochondrial intermembrane space (IMS) into the matrix. Protons are taken up via the inlet half-channel and released through the outlet half-channel, following a Grotthuss mechanism. This is ATP synthase F(0) complex subunit a from Equus asinus (Donkey).